The sequence spans 66 residues: U1-theraphotoxin-Cg1d 2 (66 aa).

The N-terminal stretch at 1–21 is a signal peptide; sequence MKMSALFPIFGLPLLFCNSFA. The propeptide occupies 22-29; the sequence is AELKATGR. Cystine bridges form between Cys-31-Cys-46, Cys-38-Cys-51, and Cys-45-Cys-58. Pro-63 is subject to Proline amide.

The protein belongs to the neurotoxin 10 (Hwtx-1) family. 46 (Jztx-7/10/12) subfamily. In terms of tissue distribution, expressed by the venom gland.

Its subcellular location is the secreted. Its function is as follows. Probable ion channel inhibitor. The polypeptide is U1-theraphotoxin-Cg1d 2 (Chilobrachys guangxiensis (Chinese earth tiger tarantula)).